Reading from the N-terminus, the 753-residue chain is MSVQKVRVERKIGDSVLSFETGHIAKQAAGSVLVQYGETVVLVAAASGTPRPGIDFFPLMCDYRERLAAAGKFPGGFLKREGRPSTKEILSSRLMDRPIRPLWPAGYKDEVQVQACVIASDLQNDGDVLAMIGGATALHISPLPFKGPLGSVRVGKVDGKLVAFPTADQLEQSELDMIVSGSRDMVAMIEGFANEMPEDEMMEAIGFAHDAIREVIDLQEEFYKKVNPEKTPYQSPEDDGLLQRLTDAYYSDFKTAQQTSGKQARAEAVRAVRDRAMADVIPDPNAADAVCVNRFKSVWHDLEEKVVRDLILAGTRPDGRDHNSLRAIHCETDLLPRVHGSALFQRGETQALITIALGTSRDEQRVDGLQDEYSKKFMLDYNFPSYSVGECRPIRGPGRREIGHGCLAERSVAPVLPSADDFPYTIRVISDITESNGSSSMASVCGATLGLMASGVPISNPVAGISVGLVQDGPDNWCLITDILGTEDHFGDMDFKIAGTQNGITGIQLDLKVTGVTNDIIRATLKQSREARIEILKKMLTTIPRPRREISPTAPRLLRTKISPDKIGALIGPGGKNIRGIQETTGAVIEVDDEGTVLVASSNKESAQEAMRQVEACTATVQIGKIYDGTVSSIKEFGAFVEILPGRDGLVHISEMSGGYISSLDQVIAVGDAMKVLVIDVDEHDRVKLSRRKALEELGEEDPLAVEGEGGGDSEGGGDGEDRPRRRRGGSGGGGGGGRGRGPRRSGGGRDRD.

Mg(2+) is bound by residues aspartate 488 and aspartate 494. In terms of domain architecture, KH spans 555-614; sequence PRLLRTKISPDKIGALIGPGGKNIRGIQETTGAVIEVDDEGTVLVASSNKESAQEAMRQV. The S1 motif domain maps to 624–692; sequence GKIYDGTVSS…EHDRVKLSRR (69 aa). The span at 698-719 shows a compositional bias: acidic residues; that stretch reads LGEEDPLAVEGEGGGDSEGGGD. Residues 698-753 are disordered; the sequence is LGEEDPLAVEGEGGGDSEGGGDGEDRPRRRRGGSGGGGGGGRGRGPRRSGGGRDRD. Positions 730 to 740 are enriched in gly residues; sequence GSGGGGGGGRG.

This sequence belongs to the polyribonucleotide nucleotidyltransferase family. Mg(2+) is required as a cofactor.

It is found in the cytoplasm. It carries out the reaction RNA(n+1) + phosphate = RNA(n) + a ribonucleoside 5'-diphosphate. Involved in mRNA degradation. Catalyzes the phosphorolysis of single-stranded polyribonucleotides processively in the 3'- to 5'-direction. This is Polyribonucleotide nucleotidyltransferase from Rhodopirellula baltica (strain DSM 10527 / NCIMB 13988 / SH1).